Here is a 353-residue protein sequence, read N- to C-terminus: Photosystem II D2 protein (353 aa).

At T2 the chain carries N-acetylthreonine. At T2 the chain carries Phosphothreonine. The helical transmembrane segment at 41–61 (CAYFALGGWFTGTTFVTSWYT) threads the bilayer. H118 serves as a coordination point for chlorophyll a. A helical transmembrane segment spans residues 125–141 (GFMLRQFELARSVQLRP). Pheophytin a is bound by residues Q130 and N143. The chain crosses the membrane as a helical span at residues 153–166 (VFVSVFLIYPLGQS). H198 contacts chlorophyll a. The chain crosses the membrane as a helical span at residues 208–228 (AALLCAIHGATVENTLFEDGD). Positions 215 and 262 each coordinate a plastoquinone. A Fe cation-binding site is contributed by H215. H269 contributes to the Fe cation binding site. Residues 279–295 (GLWMSAIGVVGLALNLR) form a helical membrane-spanning segment.

Belongs to the reaction center PufL/M/PsbA/D family. In terms of assembly, PSII is composed of 1 copy each of membrane proteins PsbA, PsbB, PsbC, PsbD, PsbE, PsbF, PsbH, PsbI, PsbJ, PsbK, PsbL, PsbM, PsbT, PsbX, PsbY, PsbZ, Psb30/Ycf12, at least 3 peripheral proteins of the oxygen-evolving complex and a large number of cofactors. It forms dimeric complexes. The cofactor is The D1/D2 heterodimer binds P680, chlorophylls that are the primary electron donor of PSII, and subsequent electron acceptors. It shares a non-heme iron and each subunit binds pheophytin, quinone, additional chlorophylls, carotenoids and lipids. There is also a Cl(-1) ion associated with D1 and D2, which is required for oxygen evolution. The PSII complex binds additional chlorophylls, carotenoids and specific lipids..

The protein localises to the plastid. The protein resides in the chloroplast thylakoid membrane. It carries out the reaction 2 a plastoquinone + 4 hnu + 2 H2O = 2 a plastoquinol + O2. Photosystem II (PSII) is a light-driven water:plastoquinone oxidoreductase that uses light energy to abstract electrons from H(2)O, generating O(2) and a proton gradient subsequently used for ATP formation. It consists of a core antenna complex that captures photons, and an electron transfer chain that converts photonic excitation into a charge separation. The D1/D2 (PsbA/PsbD) reaction center heterodimer binds P680, the primary electron donor of PSII as well as several subsequent electron acceptors. D2 is needed for assembly of a stable PSII complex. This is Photosystem II D2 protein from Phalaenopsis aphrodite subsp. formosana (Moth orchid).